Consider the following 376-residue polypeptide: Ribonucleoside-diphosphate reductase subunit beta (376 aa).

Fe cation is bound by residues Asp85, Glu116, and His119. Tyr123 is a catalytic residue. Fe cation is bound by residues Glu205, Glu239, and His242.

This sequence belongs to the ribonucleoside diphosphate reductase small chain family. Tetramer of two alpha and two beta subunits. Fe cation is required as a cofactor.

It catalyses the reaction a 2'-deoxyribonucleoside 5'-diphosphate + [thioredoxin]-disulfide + H2O = a ribonucleoside 5'-diphosphate + [thioredoxin]-dithiol. Functionally, provides the precursors necessary for DNA synthesis. Catalyzes the biosynthesis of deoxyribonucleotides from the corresponding ribonucleotides. In Buchnera aphidicola subsp. Acyrthosiphon pisum (strain APS) (Acyrthosiphon pisum symbiotic bacterium), this protein is Ribonucleoside-diphosphate reductase subunit beta (nrdB).